Here is a 512-residue protein sequence, read N- to C-terminus: D-alanine--D-alanyl carrier protein ligase (512 aa).

Position 152–153 (152–153 (TS)) interacts with ATP. A D-alanine-binding site is contributed by aspartate 199. Residue 294 to 299 (NAYGPT) coordinates ATP. Residue valine 303 participates in D-alanine binding. ATP is bound by residues aspartate 385, 397–400 (YGGR), and lysine 499. Lysine 499 contributes to the D-alanine binding site.

Belongs to the ATP-dependent AMP-binding enzyme family. DltA subfamily.

It is found in the cytoplasm. It carries out the reaction holo-[D-alanyl-carrier protein] + D-alanine + ATP = D-alanyl-[D-alanyl-carrier protein] + AMP + diphosphate. It functions in the pathway cell wall biogenesis; lipoteichoic acid biosynthesis. Its function is as follows. Catalyzes the first step in the D-alanylation of lipoteichoic acid (LTA), the activation of D-alanine and its transfer onto the D-alanyl carrier protein (Dcp) DltC. In an ATP-dependent two-step reaction, forms a high energy D-alanyl-AMP intermediate, followed by transfer of the D-alanyl residue as a thiol ester to the phosphopantheinyl prosthetic group of the Dcp. D-alanylation of LTA plays an important role in modulating the properties of the cell wall in Gram-positive bacteria, influencing the net charge of the cell wall. The sequence is that of D-alanine--D-alanyl carrier protein ligase from Streptococcus pyogenes serotype M4 (strain MGAS10750).